A 114-amino-acid polypeptide reads, in one-letter code: T cell receptor beta variable 3-1 (114 aa).

The N-terminal stretch at 1 to 21 is a signal peptide; the sequence is MGCRLLCCVVFCLLQAGPLDT. The 93-residue stretch at 22–114 folds into the Ig-like domain; that stretch reads AVSQTPKYLV…SAVYFCASSQ (93 aa). Cys42 and Cys110 form a disulfide bridge. Asn76 carries an N-linked (GlcNAc...) asparagine glycan.

As to quaternary structure, alpha-beta TR is a heterodimer composed of an alpha and beta chain; disulfide-linked. The alpha-beta TR is associated with the transmembrane signaling CD3 coreceptor proteins to form the TR-CD3 (TcR or TCR). The assembly of alpha-beta TR heterodimers with CD3 occurs in the endoplasmic reticulum where a single alpha-beta TR heterodimer associates with one CD3D-CD3E heterodimer, one CD3G-CD3E heterodimer and one CD247 homodimer forming a stable octameric structure. CD3D-CD3E and CD3G-CD3E heterodimers preferentially associate with TR alpha and TR beta chains, respectively. The association of the CD247 homodimer is the last step of TcR assembly in the endoplasmic reticulum and is required for transport to the cell surface.

It localises to the cell membrane. Functionally, v region of the variable domain of T cell receptor (TR) beta chain that participates in the antigen recognition. Alpha-beta T cell receptors are antigen specific receptors which are essential to the immune response and are present on the cell surface of T lymphocytes. Recognize peptide-major histocompatibility (MH) (pMH) complexes that are displayed by antigen presenting cells (APC), a prerequisite for efficient T cell adaptive immunity against pathogens. Binding of alpha-beta TR to pMH complex initiates TR-CD3 clustering on the cell surface and intracellular activation of LCK that phosphorylates the ITAM motifs of CD3G, CD3D, CD3E and CD247 enabling the recruitment of ZAP70. In turn ZAP70 phosphorylates LAT, which recruits numerous signaling molecules to form the LAT signalosome. The LAT signalosome propagates signal branching to three major signaling pathways, the calcium, the mitogen-activated protein kinase (MAPK) kinase and the nuclear factor NF-kappa-B (NF-kB) pathways, leading to the mobilization of transcription factors that are critical for gene expression and essential for T cell growth and differentiation. The T cell repertoire is generated in the thymus, by V-(D)-J rearrangement. This repertoire is then shaped by intrathymic selection events to generate a peripheral T cell pool of self-MH restricted, non-autoaggressive T cells. Post-thymic interaction of alpha-beta TR with the pMH complexes shapes TR structural and functional avidity. This Homo sapiens (Human) protein is T cell receptor beta variable 3-1.